Reading from the N-terminus, the 178-residue chain is NADH-quinone oxidoreductase subunit I (178 aa).

4Fe-4S ferredoxin-type domains are found at residues 45–74 (RHPD…VEAA) and 90–119 (KVYE…LGNE). [4Fe-4S] cluster contacts are provided by cysteine 54, cysteine 57, cysteine 60, cysteine 64, cysteine 99, cysteine 102, cysteine 105, and cysteine 109.

Belongs to the complex I 23 kDa subunit family. In terms of assembly, NDH-1 is composed of 15 different subunits. Subunits NuoA, H, J, K, L, M, N constitute the membrane sector of the complex. Requires [4Fe-4S] cluster as cofactor.

The protein resides in the cell membrane. The enzyme catalyses a quinone + NADH + 5 H(+)(in) = a quinol + NAD(+) + 4 H(+)(out). NDH-1 shuttles electrons from NADH, via FMN and iron-sulfur (Fe-S) centers, to quinones in the respiratory chain. The immediate electron acceptor for the enzyme in this species is believed to be ubiquinone. Couples the redox reaction to proton translocation (for every two electrons transferred, four hydrogen ions are translocated across the cytoplasmic membrane), and thus conserves the redox energy in a proton gradient. This is NADH-quinone oxidoreductase subunit I from Deinococcus radiodurans (strain ATCC 13939 / DSM 20539 / JCM 16871 / CCUG 27074 / LMG 4051 / NBRC 15346 / NCIMB 9279 / VKM B-1422 / R1).